A 364-amino-acid polypeptide reads, in one-letter code: Cobalt-precorrin-5B C(1)-methyltransferase (364 aa).

This sequence belongs to the CbiD family.

The enzyme catalyses Co-precorrin-5B + S-adenosyl-L-methionine = Co-precorrin-6A + S-adenosyl-L-homocysteine. It functions in the pathway cofactor biosynthesis; adenosylcobalamin biosynthesis; cob(II)yrinate a,c-diamide from sirohydrochlorin (anaerobic route): step 6/10. Functionally, catalyzes the methylation of C-1 in cobalt-precorrin-5B to form cobalt-precorrin-6A. This is Cobalt-precorrin-5B C(1)-methyltransferase from Pseudomonas putida (strain ATCC 700007 / DSM 6899 / JCM 31910 / BCRC 17059 / LMG 24140 / F1).